Here is a 197-residue protein sequence, read N- to C-terminus: Penicillin-binding protein activator LpoB (197 aa).

A signal peptide spans 1–17; that stretch reads MIKRMSGIALAALLLSG. A lipid anchor (N-palmitoyl cysteine) is attached at cysteine 18. The S-diacylglycerol cysteine moiety is linked to residue cysteine 18. Positions 23-57 are disordered; that stretch reads PRGETPSQPPAPTTPAKPSVVPTPTPPVVTPVPQP. The span at 29-57 shows a compositional bias: pro residues; it reads SQPPAPTTPAKPSVVPTPTPPVVTPVPQP.

It belongs to the LpoB family. As to quaternary structure, interacts with PBP1b.

The protein localises to the cell outer membrane. Its function is as follows. Regulator of peptidoglycan synthesis that is essential for the function of penicillin-binding protein 1B (PBP1b). This is Penicillin-binding protein activator LpoB from Edwardsiella piscicida.